Here is a 244-residue protein sequence, read N- to C-terminus: Phosphoadenosine 5'-phosphosulfate reductase (244 aa).

Catalysis depends on Cys-239, which acts as the Nucleophile; cysteine thiosulfonate intermediate.

This sequence belongs to the PAPS reductase family. CysH subfamily.

The protein localises to the cytoplasm. It carries out the reaction [thioredoxin]-disulfide + sulfite + adenosine 3',5'-bisphosphate + 2 H(+) = [thioredoxin]-dithiol + 3'-phosphoadenylyl sulfate. It functions in the pathway sulfur metabolism; hydrogen sulfide biosynthesis; sulfite from sulfate: step 3/3. Functionally, catalyzes the formation of sulfite from phosphoadenosine 5'-phosphosulfate (PAPS) using thioredoxin as an electron donor. The sequence is that of Phosphoadenosine 5'-phosphosulfate reductase from Escherichia coli O6:K15:H31 (strain 536 / UPEC).